Reading from the N-terminus, the 183-residue chain is MKNNDSKISKYISLILRHKPEEIGLKLDEHGYLGVLDLIEGLNKSYKGFSMDDLERIVREDSKGRYSFNEDKSKIRANQGHSIKVDLGLEAIKPPKVLYHGTGRKYIESILKNGLIKKERQYVHLSKDIETASIVGKRHGDLVILEVDSESMFKDGIKFYLSKNNVWLCDYVKVEYIKEISLL.

This sequence belongs to the KptA/TPT1 family.

Functionally, removes the 2'-phosphate from RNA via an intermediate in which the phosphate is ADP-ribosylated by NAD followed by a presumed transesterification to release the RNA and generate ADP-ribose 1''-2''-cyclic phosphate (APPR&gt;P). May function as an ADP-ribosylase. The chain is Probable RNA 2'-phosphotransferase from Clostridium perfringens (strain 13 / Type A).